An 856-amino-acid chain; its full sequence is Villin-like protein (856 aa).

6 Gelsolin-like repeats span residues 22-74 (RKMV…EAQG), 146-186 (VSAT…SEKA), 263-307 (LVVL…QERK), 401-450 (LHRQ…DEIE), 521-561 (TRTM…DQRE), and 624-665 (LVLA…WKEA). Residues 762 to 796 (SQDSSENDLVRSPKSAGSRTSSSVSSTSATINGGL) form a disordered region. The span at 776-791 (SAGSRTSSSVSSTSAT) shows a compositional bias: low complexity. One can recognise an HP domain in the interval 790 to 856 (ATINGGLRRE…RQEKKQLGFF (67 aa)).

It belongs to the villin/gelsolin family. In terms of tissue distribution, ubiquitously expressed in 16 tissues examined.

In terms of biological role, possible tumor suppressor. The sequence is that of Villin-like protein (VILL) from Homo sapiens (Human).